A 289-amino-acid chain; its full sequence is Light-independent protochlorophyllide reductase iron-sulfur ATP-binding protein (289 aa).

ATP is bound by residues 10–15 (GIGKST) and Lys-39. Mg(2+) is bound at residue Ser-14. [4Fe-4S] cluster-binding residues include Cys-95 and Cys-129. Residue 180–181 (NR) participates in ATP binding.

This sequence belongs to the NifH/BchL/ChlL family. Homodimer. Protochlorophyllide reductase is composed of three subunits; ChlL, ChlN and ChlB. It depends on [4Fe-4S] cluster as a cofactor.

It localises to the plastid. Its subcellular location is the chloroplast. The catalysed reaction is chlorophyllide a + oxidized 2[4Fe-4S]-[ferredoxin] + 2 ADP + 2 phosphate = protochlorophyllide a + reduced 2[4Fe-4S]-[ferredoxin] + 2 ATP + 2 H2O. The protein operates within porphyrin-containing compound metabolism; chlorophyll biosynthesis (light-independent). Functionally, component of the dark-operative protochlorophyllide reductase (DPOR) that uses Mg-ATP and reduced ferredoxin to reduce ring D of protochlorophyllide (Pchlide) to form chlorophyllide a (Chlide). This reaction is light-independent. The L component serves as a unique electron donor to the NB-component of the complex, and binds Mg-ATP. In Marchantia polymorpha (Common liverwort), this protein is Light-independent protochlorophyllide reductase iron-sulfur ATP-binding protein.